The sequence spans 104 residues: MMLKPSIDKLLDKVPSRYSLVILQAKRAHELAAGAEPTQEFSSVKYTLQALEEIESGNVIIHPNPEAKRKLARLKVIQARLAAEEEERKIKEQIAKEKEEGDKI.

This sequence belongs to the RNA polymerase subunit omega family. In terms of assembly, the RNAP catalytic core consists of 2 alpha, 1 beta, 1 beta' and 1 omega subunit. When a sigma factor is associated with the core the holoenzyme is formed, which can initiate transcription.

The enzyme catalyses RNA(n) + a ribonucleoside 5'-triphosphate = RNA(n+1) + diphosphate. In terms of biological role, promotes RNA polymerase assembly. Latches the N- and C-terminal regions of the beta' subunit thereby facilitating its interaction with the beta and alpha subunits. This chain is DNA-directed RNA polymerase subunit omega, found in Streptococcus thermophilus (strain CNRZ 1066).